The following is a 792-amino-acid chain: Lon protease (792 aa).

Residues 16-208 (LPILPLRETV…KVTYYLTREL (193 aa)) enclose the Lon N-terminal domain. 360–367 (GPPGVGKT) lines the ATP pocket. In terms of domain architecture, Lon proteolytic spans 597-778 (KDEVGVATGL…DEVLNLALLE (182 aa)). Active-site residues include Ser684 and Lys727.

Belongs to the peptidase S16 family. Homohexamer. Organized in a ring with a central cavity.

It is found in the cytoplasm. It catalyses the reaction Hydrolysis of proteins in presence of ATP.. ATP-dependent serine protease that mediates the selective degradation of mutant and abnormal proteins as well as certain short-lived regulatory proteins. Required for cellular homeostasis and for survival from DNA damage and developmental changes induced by stress. Degrades polypeptides processively to yield small peptide fragments that are 5 to 10 amino acids long. Binds to DNA in a double-stranded, site-specific manner. The polypeptide is Lon protease (Dictyoglomus thermophilum (strain ATCC 35947 / DSM 3960 / H-6-12)).